We begin with the raw amino-acid sequence, 232 residues long: Cytidylate kinase (232 aa).

ATP is bound at residue 11-19 (GPAGAGKST).

This sequence belongs to the cytidylate kinase family. Type 1 subfamily.

It is found in the cytoplasm. The catalysed reaction is CMP + ATP = CDP + ADP. It catalyses the reaction dCMP + ATP = dCDP + ADP. The polypeptide is Cytidylate kinase (Roseiflexus castenholzii (strain DSM 13941 / HLO8)).